A 260-amino-acid chain; its full sequence is MSTFTNPLKSRLKETDPLFGLWLSLGSDAAAEALAHAGYDWLLIDMEHSPNDSGDVTSQLRAIAAAHLPSEPVVRVPSSEAWLVKRVLDAGARTLMFPNIESADEAARAVRLTQYPSAGALDGERGVAGAVRAAGYGMRRDYVQTANAQIATIVQIESARGLQEVEKIAATPGVDCLFVGPADLAASLGHLGDSKHADVQAAMARIVSAADKAGIAAGIFAMDVASAKQHRDAGFRFIALAADVMWMLRATRQALQEVRS.

Catalysis depends on His-48, which acts as the Proton acceptor. A divalent metal cation is bound by residues Glu-157 and Asp-183.

This sequence belongs to the HpcH/HpaI aldolase family. Requires Mn(2+) as cofactor. It depends on Mg(2+) as a cofactor. The cofactor is Co(2+).

The catalysed reaction is D-glyceraldehyde + 3-hydroxypyruvate = 2-dehydro-D-gluconate. The enzyme catalyses D-glyceraldehyde + pyruvate = 2-dehydro-3-deoxy-L-galactonate. It carries out the reaction 2-dehydro-3-deoxy-D-gluconate = D-glyceraldehyde + pyruvate. In terms of biological role, aldolase which can catalyze in vitro the aldolisation reaction between hydroxypyruvate (HPA) or pyruvate (PA) and D-glyceraldehyde (D-GA). The condensation of hydroxypyruvate and D-glyceraldehyde produces 2-dehydro-D-gluconate. The condensation of pyruvate and D-glyceraldehyde produces 2-dehydro-3-deoxy-L-galactonate as the major product and 2-dehydro-3-deoxy-D-gluconate. Also catalyzes the retro-aldol type decarboxylation of oxaloacetate, a general property of known pyruvate aldolases. The chain is Hydroxypyruvate/pyruvate aldolase Bphyt_0320 from Paraburkholderia phytofirmans (strain DSM 17436 / LMG 22146 / PsJN) (Burkholderia phytofirmans).